A 224-amino-acid polypeptide reads, in one-letter code: 7-cyano-7-deazaguanine synthase (224 aa).

ATP is bound at residue 9–19 (LSGGLDSATVL). Positions 189, 199, 202, and 205 each coordinate Zn(2+).

This sequence belongs to the QueC family. Zn(2+) serves as cofactor.

The enzyme catalyses 7-carboxy-7-deazaguanine + NH4(+) + ATP = 7-cyano-7-deazaguanine + ADP + phosphate + H2O + H(+). The protein operates within purine metabolism; 7-cyano-7-deazaguanine biosynthesis. Its function is as follows. Catalyzes the ATP-dependent conversion of 7-carboxy-7-deazaguanine (CDG) to 7-cyano-7-deazaguanine (preQ(0)). In Ralstonia pickettii (strain 12J), this protein is 7-cyano-7-deazaguanine synthase.